Reading from the N-terminus, the 164-residue chain is 2-C-methyl-D-erythritol 2,4-cyclodiphosphate synthase (164 aa).

Aspartate 9 and histidine 11 together coordinate a divalent metal cation. Residues 9–11 (DVH) and 35–36 (HS) contribute to the 4-CDP-2-C-methyl-D-erythritol 2-phosphate site. An a divalent metal cation-binding site is contributed by histidine 43. 4-CDP-2-C-methyl-D-erythritol 2-phosphate is bound by residues 57-59 (DIG), 62-66 (FPDTD), 133-136 (TTTE), phenylalanine 140, and arginine 143.

This sequence belongs to the IspF family. As to quaternary structure, homotrimer. It depends on a divalent metal cation as a cofactor.

The catalysed reaction is 4-CDP-2-C-methyl-D-erythritol 2-phosphate = 2-C-methyl-D-erythritol 2,4-cyclic diphosphate + CMP. It functions in the pathway isoprenoid biosynthesis; isopentenyl diphosphate biosynthesis via DXP pathway; isopentenyl diphosphate from 1-deoxy-D-xylulose 5-phosphate: step 4/6. Involved in the biosynthesis of isopentenyl diphosphate (IPP) and dimethylallyl diphosphate (DMAPP), two major building blocks of isoprenoid compounds. Catalyzes the conversion of 4-diphosphocytidyl-2-C-methyl-D-erythritol 2-phosphate (CDP-ME2P) to 2-C-methyl-D-erythritol 2,4-cyclodiphosphate (ME-CPP) with a corresponding release of cytidine 5-monophosphate (CMP). The chain is 2-C-methyl-D-erythritol 2,4-cyclodiphosphate synthase from Syntrophotalea carbinolica (strain DSM 2380 / NBRC 103641 / GraBd1) (Pelobacter carbinolicus).